The primary structure comprises 3169 residues: FRAS1-related extracellular matrix protein 2 (3169 aa).

A disordered region spans residues 1-24 (MHSAGTPGLSSRRTGNSTSFQPGP). A signal peptide spans 1-46 (MHSAGTPGLSSRRTGNSTSFQPGPPPPPRLLLLLLLLLSLVSRVPA). Over residues 8 to 21 (GLSSRRTGNSTSFQ) the composition is skewed to polar residues. Over 47–3113 (QPAAFGRALL…SPSSAVSLVT (3067 aa)) the chain is Extracellular. CSPG repeat units lie at residues 319–413 (KPSF…LELE), 438–537 (APVV…LRMV), 560–675 (PPVL…FRVQ), 700–807 (PPEL…FQVE), 828–919 (QPPE…LEVS), 945–1037 (HPTG…LSLS), 1066–1168 (APEI…FRCS), 1189–1282 (EQPE…IKLT), 1303–1399 (TPRM…FDVT), 1420–1512 (VFPD…FQVT), 1532–1621 (KKPV…FTVT), and 1655–1752 (VPQI…FAVE). N-linked (GlcNAc...) asparagine glycosylation is present at N358. N-linked (GlcNAc...) asparagine glycosylation is found at N1244 and N1369. 2 N-linked (GlcNAc...) asparagine glycosylation sites follow: N1584 and N1741. 5 Calx-beta domains span residues 1759-1858 (LTYQ…VVLS), 1871-1982 (ATVE…VLLS), 1997-2103 (QVTI…LVLR), 2118-2220 (VSIN…LVLG), and 2238-2342 (TLIR…VHLK). The interval 3036-3057 (SLVSQGKPQSTTKSRKKREIRS) is disordered. The segment covering 3037–3047 (LVSQGKPQSTT) has biased composition (polar residues). Residues 3114–3134 (VVGGTTVGLLTICLTVIAVLM) form a helical membrane-spanning segment. The Cytoplasmic portion of the chain corresponds to 3135–3169 (CRGKESFRGKDAPKGSSSSEPMVPPQSHHNDSSEV). A disordered region spans residues 3141 to 3169 (FRGKDAPKGSSSSEPMVPPQSHHNDSSEV).

The protein belongs to the FRAS1 family. As to quaternary structure, interacts with FREM1.

It is found in the cell membrane. Functionally, extracellular matrix protein required for maintenance of the integrity of the skin epithelium and for maintenance of renal epithelia. Required for epidermal adhesion. Involved in the development of eyelids and the anterior segment of the eyeballs. The chain is FRAS1-related extracellular matrix protein 2 (FREM2) from Homo sapiens (Human).